The following is a 488-amino-acid chain: Beta-amylase (488 aa).

The substrate site is built by Asp51, His91, and Asp99. The active-site Proton donor is Glu184. The substrate site is built by Lys293, His298, and Thr340. Residue Glu378 is the Proton acceptor of the active site. Substrate is bound by residues 379 to 380 and Arg418; that span reads NA.

The protein belongs to the glycosyl hydrolase 14 family.

It carries out the reaction Hydrolysis of (1-&gt;4)-alpha-D-glucosidic linkages in polysaccharides so as to remove successive maltose units from the non-reducing ends of the chains.. In Zea mays (Maize), this protein is Beta-amylase (BMY1).